The sequence spans 868 residues: MWRTKRGRTRRRDAGGNPWQNLEKTSVLQETRMFNETPVNARKCTHILTKILYLLNQGEVLGTREATECFFAMTKLFQSKDVVMRRMVYLGIKELSPIADDVIIVTSSLTKDMTGKEDLYRAPAIRALCSITDSTMLQAVERYMKQCIVDRNAPVSSGALVSSLHLASTAGEVVKRWANEAQEALNSDNIMVQYHGLGLLYHIRKADRLAVTKLVNKLTRQHLRSPYATCFLIRIACKIMEEEDASGNATEDSPLFNFVECCLRNKSEMVVYEAAHAVVNLKRTNPRELSTAVSILQLFCGSSKATLRFAAVRTMNKVAMLHPPAVNVCNLDLEGLIADSNRSVATLAITTLLKTGAESSVERLMKQIATFVAEISDEFKLVVVQAIRSLCTKFPRKHAVTMNFLSGMLREEGGLEYKTSIVDTIILIIEENPDAKEAGLGHLCEFIEDCEHTSLAVRILHLLGKEGPYSKCPSRYIRFIYNRVILENATVRAAAVAAIAQFGACCPDLLPNVLVLLNRCQMDCDDEVRDRATYYYTILNQSNPELNKRFIADHEIVSLPLLEKSLNEHLKGPLAERFDLSIVPKSQVIQPEVNEEVMIMNKAAPKIARVNREEVNTEKLLAIPGIHHVGALHKSCAPVQLTESETEYTVSCIKHCFAHHIVFQFDCVNTLSDQLLENVRVDLELPEGFVSRAVIPCAKLPYGDKESTYVIVQFPEDVPSSIATLGATLRFLVKDCDPATGQPDSDEGYNDEYILEDIEVTVADQMQKSKKQNFLAAWESADTEEWVEAEDTFELSSVTSLQDAVNTILKFLGLAPANLSENVPDGTFRGGVEVLVRSKLAVADGVTMQLTVRSTDMDVAELITSAVG.

Over residues Met-1 to Arg-11 the composition is skewed to basic residues. A disordered region spans residues Met-1–Leu-22. 4 HEAT repeats span residues Arg-64–Asp-101, Arg-287–Pro-324, Val-326–Ser-359, and Ser-360–Arg-396.

Belongs to the COPG family. In terms of assembly, oligomeric complex that consists of at least the alpha, beta, beta', gamma, delta, epsilon and zeta subunits.

The protein resides in the cytoplasm. It is found in the golgi apparatus membrane. The protein localises to the cytoplasmic vesicle. Its subcellular location is the COPI-coated vesicle membrane. It localises to the endoplasmic reticulum. The coatomer is a cytosolic protein complex that binds to dilysine motifs and reversibly associates with Golgi non-clathrin-coated vesicles, which further mediate biosynthetic protein transport from the ER, via the Golgi up to the trans Golgi network. Coatomer complex is required for budding from Golgi membranes, and is essential for the retrograde Golgi-to-ER transport of dilysine-tagged proteins. The chain is Coatomer subunit gamma from Anopheles gambiae (African malaria mosquito).